Consider the following 446-residue polypeptide: MSDYLSVTSLTKYLKMKFDRDPYLERVYLTGQVSNYRRRPSHQYFSLKDEGAVIQATIWAGVFKKIGFDLEEGMKINVVGRVQIYEPSGSYSLIIEKAEPDGIGALALQFEQLRKKLTAEGYFDDRHKQPLPNFVKKIGVITSPSGAVIRDIITTVSRRFPGVEILLFPTKVQGDGAAQEIVENIQKANQREDLDLLIVGRGGGSIEDLWAFNEEIVVQSIFESRLPVISSVGHETDTTLADFVADRRAATPTAAAELATPISKADTLAWIRERQNRAYQACLRRIQYNQERLAKLSQSVVFRQPERLYDGYLQKLDRLTTRLETFMSQDFERKQKSAEFLRQRLHGLNLSTRVKNYQDRRESLQRLLVTTTKNTINGNRVRLEKAQDALLSLDTSRIVARGYAIVNKNDKPLTTIKDITEGEQLTIQMRDGQLEVEVKNVNEKNI.

This sequence belongs to the XseA family. As to quaternary structure, heterooligomer composed of large and small subunits.

The protein resides in the cytoplasm. It catalyses the reaction Exonucleolytic cleavage in either 5'- to 3'- or 3'- to 5'-direction to yield nucleoside 5'-phosphates.. In terms of biological role, bidirectionally degrades single-stranded DNA into large acid-insoluble oligonucleotides, which are then degraded further into small acid-soluble oligonucleotides. The polypeptide is Exodeoxyribonuclease 7 large subunit (Streptococcus thermophilus (strain ATCC BAA-250 / LMG 18311)).